We begin with the raw amino-acid sequence, 794 residues long: Lon protease (794 aa).

The 194-residue stretch at 29-222 (VPLLPLRGVL…TLISIIQDEQ (194 aa)) folds into the Lon N-terminal domain. 374–381 (GPPGVGKT) is an ATP binding site. Positions 610–791 (TDQVGMATGL…DEVLEHALVG (182 aa)) constitute a Lon proteolytic domain. Active-site residues include Ser-697 and Lys-740.

The protein belongs to the peptidase S16 family. Homohexamer. Organized in a ring with a central cavity.

It is found in the cytoplasm. The enzyme catalyses Hydrolysis of proteins in presence of ATP.. Functionally, ATP-dependent serine protease that mediates the selective degradation of mutant and abnormal proteins as well as certain short-lived regulatory proteins. Required for cellular homeostasis and for survival from DNA damage and developmental changes induced by stress. Degrades polypeptides processively to yield small peptide fragments that are 5 to 10 amino acids long. Binds to DNA in a double-stranded, site-specific manner. In Bacillus thuringiensis (strain Al Hakam), this protein is Lon protease.